Reading from the N-terminus, the 51-residue chain is Large ribosomal subunit protein eL39 (51 aa).

This sequence belongs to the eukaryotic ribosomal protein eL39 family.

In Pyrobaculum aerophilum (strain ATCC 51768 / DSM 7523 / JCM 9630 / CIP 104966 / NBRC 100827 / IM2), this protein is Large ribosomal subunit protein eL39 (rpl39e).